Consider the following 296-residue polypeptide: Mycothiol acetyltransferase (296 aa).

N-acetyltransferase domains are found at residues 8-146 (RSPE…PPVE) and 151-296 (ISVR…GPPV). Glu-39 lines the 1D-myo-inositol 2-(L-cysteinylamino)-2-deoxy-alpha-D-glucopyranoside pocket. 76 to 78 (VVT) contacts acetyl-CoA. 1D-myo-inositol 2-(L-cysteinylamino)-2-deoxy-alpha-D-glucopyranoside-binding residues include Glu-178, Lys-220, and Glu-228. Acetyl-CoA-binding positions include 232–234 (VGV) and 239–245 (QGEGLGR). Tyr-266 is a 1D-myo-inositol 2-(L-cysteinylamino)-2-deoxy-alpha-D-glucopyranoside binding site.

The protein belongs to the acetyltransferase family. MshD subfamily. Monomer.

The enzyme catalyses 1D-myo-inositol 2-(L-cysteinylamino)-2-deoxy-alpha-D-glucopyranoside + acetyl-CoA = mycothiol + CoA + H(+). Functionally, catalyzes the transfer of acetyl from acetyl-CoA to desacetylmycothiol (Cys-GlcN-Ins) to form mycothiol. This is Mycothiol acetyltransferase from Kytococcus sedentarius (strain ATCC 14392 / DSM 20547 / JCM 11482 / CCUG 33030 / NBRC 15357 / NCTC 11040 / CCM 314 / 541) (Micrococcus sedentarius).